The chain runs to 61 residues: Small ribosomal subunit protein uS14 (61 aa).

Residues Cys-24, Cys-27, Cys-40, and Cys-43 each contribute to the Zn(2+) site.

This sequence belongs to the universal ribosomal protein uS14 family. Zinc-binding uS14 subfamily. Part of the 30S ribosomal subunit. Contacts proteins S3 and S10. Requires Zn(2+) as cofactor.

In terms of biological role, binds 16S rRNA, required for the assembly of 30S particles and may also be responsible for determining the conformation of the 16S rRNA at the A site. In Clostridium perfringens (strain ATCC 13124 / DSM 756 / JCM 1290 / NCIMB 6125 / NCTC 8237 / Type A), this protein is Small ribosomal subunit protein uS14.